The primary structure comprises 240 residues: Nuclear receptor-interacting protein 3 (240 aa).

This Mus musculus (Mouse) protein is Nuclear receptor-interacting protein 3 (Nrip3).